The sequence spans 198 residues: 3-isopropylmalate dehydratase small subunit (198 aa).

Belongs to the LeuD family. LeuD type 1 subfamily. As to quaternary structure, heterodimer of LeuC and LeuD.

The catalysed reaction is (2R,3S)-3-isopropylmalate = (2S)-2-isopropylmalate. The protein operates within amino-acid biosynthesis; L-leucine biosynthesis; L-leucine from 3-methyl-2-oxobutanoate: step 2/4. Its function is as follows. Catalyzes the isomerization between 2-isopropylmalate and 3-isopropylmalate, via the formation of 2-isopropylmaleate. The chain is 3-isopropylmalate dehydratase small subunit from Mycobacterium marinum (strain ATCC BAA-535 / M).